Here is a 548-residue protein sequence, read N- to C-terminus: MDSQRNLLVIALLFVSFMIWQAWEQDKNPQPQAQQTTQTTTTAAGSAADQGVPASGQGKLISVKTDVLDLTINTRGGDVEQALLPAYPKELNSTQPFQLLETSPQFIYQAQSGLTGRDGPDNPANGPRPLYNVEKDAYVLAEGQNELQVPMTYTDAAGNTFTKTFILKRGDYAVNVNYNVQNAGEKPLEISTFGQLKQSITLPPYLDTGSSNFALHTFRGAAYSTPDEKYEKYKFDTIADNENLNISSKGGWVAMLQQYFATAWIPHNDGTNNFYTANLGNGIAAIGYKSQPVLVQPGQTGAMNSTLWVGPEIQDKMAAVAPHLDLTVDYGWLWFISQPLFKLLKWIHSFVGNWGFSIIIITFIVRGIMYPLTKAQYTSMAKMRMLQPKIQAMRERLGDDKQRISQEMMALYKAEKVNPLGGCFPLLIQMPIFLALYYMLMGSVELRQAPFALWIHDLSAQDPYYILPILMGVTMFFIQKMSPTTVTDPMQQKIMTFMPVIFTVFFLWFPSGLVLYYIVSNLVTIIQQQLIYRGLEKRGLHSREKKKS.

Residues 6-26 (NLLVIALLFVSFMIWQAWEQD) traverse the membrane as a helical segment. The tract at residues 28–55 (NPQPQAQQTTQTTTTAAGSAADQGVPAS) is disordered. Low complexity predominate over residues 30-50 (QPQAQQTTQTTTTAAGSAADQ). 4 consecutive transmembrane segments (helical) span residues 350–370 (FVGN…GIMY), 420–440 (LGGC…YYML), 458–478 (LSAQ…MFFI), and 499–519 (PVIF…YYIV).

It belongs to the OXA1/ALB3/YidC family. Type 1 subfamily. Interacts with the Sec translocase complex via SecD. Specifically interacts with transmembrane segments of nascent integral membrane proteins during membrane integration.

The protein localises to the cell inner membrane. Its function is as follows. Required for the insertion and/or proper folding and/or complex formation of integral membrane proteins into the membrane. Involved in integration of membrane proteins that insert both dependently and independently of the Sec translocase complex, as well as at least some lipoproteins. Aids folding of multispanning membrane proteins. The protein is Membrane protein insertase YidC of Escherichia fergusonii (strain ATCC 35469 / DSM 13698 / CCUG 18766 / IAM 14443 / JCM 21226 / LMG 7866 / NBRC 102419 / NCTC 12128 / CDC 0568-73).